The following is a 159-amino-acid chain: Large ribosomal subunit protein uL15 (159 aa).

Residues 1 to 46 (MKLNELSPSVPKKNRKRIGRGNSSGWGKTAGKGSNGQNSRAGGGVK) are disordered. Residues 22–34 (NSSGWGKTAGKGS) are compositionally biased toward gly residues.

Belongs to the universal ribosomal protein uL15 family. As to quaternary structure, part of the 50S ribosomal subunit.

Binds to the 23S rRNA. In Fusobacterium nucleatum subsp. nucleatum (strain ATCC 25586 / DSM 15643 / BCRC 10681 / CIP 101130 / JCM 8532 / KCTC 2640 / LMG 13131 / VPI 4355), this protein is Large ribosomal subunit protein uL15.